The chain runs to 110 residues: Ribonuclease P protein component 4 (110 aa).

Zn(2+) contacts are provided by cysteine 65, cysteine 68, cysteine 94, and cysteine 97.

Belongs to the eukaryotic/archaeal RNase P protein component 4 family. As to quaternary structure, consists of a catalytic RNA component and at least 4-5 protein subunits. It depends on Zn(2+) as a cofactor.

The protein localises to the cytoplasm. It carries out the reaction Endonucleolytic cleavage of RNA, removing 5'-extranucleotides from tRNA precursor.. Part of ribonuclease P, a protein complex that generates mature tRNA molecules by cleaving their 5'-ends. This is Ribonuclease P protein component 4 from Methanococcus maripaludis (strain C5 / ATCC BAA-1333).